The sequence spans 550 residues: Chaperonin GroEL 2 (550 aa).

ATP contacts are provided by residues 30–33 (TLGP), Lys51, 87–91 (DGTTT), Gly415, 480–482 (NAA), and Asp496.

It belongs to the chaperonin (HSP60) family. Forms a cylinder of 14 subunits composed of two heptameric rings stacked back-to-back. Interacts with the co-chaperonin GroES.

Its subcellular location is the cytoplasm. The catalysed reaction is ATP + H2O + a folded polypeptide = ADP + phosphate + an unfolded polypeptide.. In terms of biological role, together with its co-chaperonin GroES, plays an essential role in assisting protein folding. The GroEL-GroES system forms a nano-cage that allows encapsulation of the non-native substrate proteins and provides a physical environment optimized to promote and accelerate protein folding. In Erythrobacter litoralis (strain HTCC2594), this protein is Chaperonin GroEL 2.